Consider the following 411-residue polypeptide: Putative BMP-2-inducible kinase-like protein (411 aa).

3 disordered regions span residues Met1–Ile87, Ser215–Gln280, and Gln392–Gln411. 2 stretches are compositionally biased toward basic and acidic residues: residues Ser8–Glu18 and Glu53–Tyr68. A coiled-coil region spans residues Glu47 to Met71. 2 stretches are compositionally biased toward basic residues: residues Val220–Arg234 and Asn243–Leu258.

The sequence is that of Putative BMP-2-inducible kinase-like protein (BMP2KL) from Homo sapiens (Human).